A 157-amino-acid polypeptide reads, in one-letter code: C-type lectin 9a (157 aa).

The signal sequence occupies residues methionine 1–alanine 23. 3 disulfides stabilise this stretch: cysteine 27/cysteine 38, cysteine 55/cysteine 151, and cysteine 126/cysteine 143. Residues tyrosine 34–lysine 152 enclose the C-type lectin domain.

It belongs to the snaclec family. In terms of assembly, heteromultimer; disulfide-linked. As to expression, expressed by the venom gland.

It is found in the secreted. Its function is as follows. Interferes with one step of hemostasis (modulation of platelet aggregation, or coagulation cascade, for example). In Crotalus adamanteus (Eastern diamondback rattlesnake), this protein is C-type lectin 9a.